The sequence spans 293 residues: Diaminopimelate epimerase (293 aa).

Asparagine 13, glutamine 46, and asparagine 66 together coordinate substrate. Catalysis depends on cysteine 75, which acts as the Proton donor. Substrate-binding positions include 76-77 (GN), asparagine 162, asparagine 195, and 213-214 (ER). Cysteine 222 functions as the Proton acceptor in the catalytic mechanism. 223–224 (GT) lines the substrate pocket.

Belongs to the diaminopimelate epimerase family. Homodimer.

The protein resides in the cytoplasm. It carries out the reaction (2S,6S)-2,6-diaminopimelate = meso-2,6-diaminopimelate. The protein operates within amino-acid biosynthesis; L-lysine biosynthesis via DAP pathway; DL-2,6-diaminopimelate from LL-2,6-diaminopimelate: step 1/1. In terms of biological role, catalyzes the stereoinversion of LL-2,6-diaminopimelate (L,L-DAP) to meso-diaminopimelate (meso-DAP), a precursor of L-lysine and an essential component of the bacterial peptidoglycan. In Psychrobacter sp. (strain PRwf-1), this protein is Diaminopimelate epimerase.